Reading from the N-terminus, the 132-residue chain is uncharacterized protein (132 aa).

An N-terminal signal peptide occupies residues 1-18 (MRKIISMLFIPLFIFAMA).

This is an uncharacterized protein from Aquifex aeolicus (strain VF5).